A 122-amino-acid polypeptide reads, in one-letter code: Large ribosomal subunit protein uL14c (122 aa).

Belongs to the universal ribosomal protein uL14 family. In terms of assembly, part of the 50S ribosomal subunit.

Its subcellular location is the plastid. Functionally, binds to 23S rRNA. The sequence is that of Large ribosomal subunit protein uL14c from Euglena longa (Euglenophycean alga).